Reading from the N-terminus, the 539-residue chain is Putative cysteine ligase BshC (539 aa).

ADP-binding positions include Ser-146 and 384 to 386 (ERH). Residues 455–475 (LLKNAAFIQDQLQFLERTVMK) adopt a coiled-coil conformation. Residues 490 to 493 (RIQN), Trp-506, and Tyr-510 contribute to the ADP site.

It belongs to the BshC family. As to quaternary structure, homodimer in solution.

Functionally, involved in bacillithiol (BSH) biosynthesis. May catalyze the last step of the pathway, the addition of cysteine to glucosamine malate (GlcN-Mal) to generate BSH. The protein is Putative cysteine ligase BshC of Bacillus subtilis (strain 168).